A 438-amino-acid polypeptide reads, in one-letter code: MSNTTDSALWTAFIHVIQRDVQPAVGCTEPIALALASAIAASYLPAKAERIEARVSPNLMKNGMGVTVPGTGMVGLPIAAAVGALGGDPDGGLEVLKNLSSQQVVEAKAMLDRGDVRVDMQAGDEILFAEATLYHGDQWACVTIAGGHTQVVRIVINGNVLFELAPESPSEQVVCHAHDCLKQATARQVYQFATQVPFEQIAFILQAAKLNGALSQEGLTGNYGLHIGASLMRQRGRGLLVKDLLSDIMIRSAAASDARMGGALLPAMSNSGSGNQGIAATMPVVVVAEHVGASEEELARALILSHLMAIYIHNQLPTLSALCAATTAAMGAAAGMAWLLEPRYEPVALAIGSMIGDISGIICDGAANSCAMKVSTSVSAAYKAVLMALDSSGVTGNEGIVADDVDQSIANLCALACGAMRQTDSQIIEIMAHKCHCD.

The protein belongs to the UPF0597 family.

The polypeptide is UPF0597 protein YE0448 (Yersinia enterocolitica serotype O:8 / biotype 1B (strain NCTC 13174 / 8081)).